A 115-amino-acid polypeptide reads, in one-letter code: uncharacterized protein (115 aa).

Residues 1 to 11 (MKLTKEKKNDC) lie on the Cytoplasmic side of the membrane. The helical transmembrane segment at 12 to 32 (LVGVSYIPPLNFFTLTFLFLL) threads the bilayer. At 33 to 52 (RIEKVHLSLSLSLSLSLRFY) the chain is on the extracellular side. Residues 53 to 73 (YFHNVCYPSLFLFFCFVIPFF) traverse the membrane as a helical segment. Topologically, residues 74–78 (YSVRF) are cytoplasmic. Residues 79–98 (ILLYLHILRSFYELNILLLY) traverse the membrane as a helical segment. Residues 99-115 (GAENSRRQSPPGYYVIR) lie on the Extracellular side of the membrane.

The protein resides in the membrane. This is an uncharacterized protein from Saccharomyces cerevisiae (strain ATCC 204508 / S288c) (Baker's yeast).